The chain runs to 509 residues: Maturase K (509 aa).

Belongs to the intron maturase 2 family. MatK subfamily.

It is found in the plastid. The protein resides in the chloroplast. Its function is as follows. Usually encoded in the trnK tRNA gene intron. Probably assists in splicing its own and other chloroplast group II introns. This chain is Maturase K, found in Sequoia sempervirens (California redwood).